Consider the following 3011-residue polypeptide: Genome polyprotein (3011 aa).

An N-acetylserine; by host modification is found at serine 2. Residues 2–23 (STNPKPQKKNKRNTNRRPQDVK) form an interaction with STAT1 region. The interaction with EIF2AK2/PKR stretch occupies residues 2 to 58 (STNPKPQKKNKRNTNRRPQDVKFPGGGQIVGGVYLLPRRGPRLGVRATRKTSERSQP). An interaction with DDX3X region spans residues 2-59 (STNPKPQKKNKRNTNRRPQDVKFPGGGQIVGGVYLLPRRGPRLGVRATRKTSERSQPR). The disordered stretch occupies residues 2–75 (STNPKPQKKN…PKARRPEGRT (74 aa)). Residues 2–168 (STNPKPQKKN…EDGVNYATGN (167 aa)) are Cytoplasmic-facing. Short sequence motifs (nuclear localization signal) lie at residues 5–13 (PKPQKKNKR) and 38–43 (PRRGPR). Residues 7–16 (PQKKNKRNTN) are compositionally biased toward basic residues. Positions 32–47 (GGVYLLPRRGPRLGVR) are enriched in low complexity. A Phosphoserine; by host modification is found at serine 53. 2 consecutive short sequence motifs (nuclear localization signal) follow at residues 58–64 (PRGRRQP) and 66–71 (PKARRP). Over residues 58 to 68 (PRGRRQPIPKA) the composition is skewed to basic residues. Serine 99 is modified (phosphoserine; by host). Residues 112–152 (PRRRSRNLGKVIDTLTCGFADLMGYIPLVGAPLGGAARALA) form an important for endoplasmic reticulum and mitochondrial localization region. Serine 116 carries the post-translational modification Phosphoserine; by host PKA. Residues 122–173 (VIDTLTCGFADLMGYIPLVGAPLGGAARALAHGVRVLEDGVNYATGNLPGCS) form an interaction with APOA2 region. Positions 164–167 (YATG) are important for lipid droplets localization. The helical transmembrane segment at 169 to 189 (LPGCSFSIFLLALLSCLTVPA) threads the bilayer. Residues 178-191 (LLALLSCLTVPASA) constitute a propeptide, ER anchor for the core protein, removed in mature form by host signal peptidase. Over 190–358 (SAYQVRNSTG…AGAHWGVLAG (169 aa)) the chain is Lumenal. N-linked (GlcNAc...) asparagine; by host glycans are attached at residues asparagine 196, asparagine 209, and asparagine 234. The tract at residues 265 to 296 (LVGSATLCSALYVGDLCGSVFLVGQLFTFSPR) is important for fusion. Asparagine 305 carries N-linked (GlcNAc...) asparagine; by host glycosylation. A helical transmembrane segment spans residues 359–379 (IAYFSMVGNWAKVLVVLLLFA). Residues 380-725 (GVDAETHVTG…WEYVVLLFLL (346 aa)) lie on the Lumenal side of the membrane. The tract at residues 385–411 (THVTGGSAGHTVSGFVSLLAPGAKQNV) is HVR1. 4 N-linked (GlcNAc...) (high mannose) asparagine; by host glycosylation sites follow: asparagine 417, asparagine 423, asparagine 430, and asparagine 448. 4 disulfide bridges follow: cysteine 429–cysteine 552, cysteine 452–cysteine 459, cysteine 486–cysteine 494, and cysteine 503–cysteine 508. The interval 474-480 (YANGSGP) is HVR2. A glycan (N-linked (GlcNAc...) asparagine; by host) is linked at asparagine 476. Residues 481 to 493 (DQRPYCWHYPPKP) are CD81-binding 1. Asparagine 532 carries N-linked (GlcNAc...) (high mannose) asparagine; by host glycosylation. The interval 543 to 551 (RPPLGNWFG) is CD81-binding 2. The N-linked (GlcNAc...) (high mannose) asparagine; by host glycan is linked to asparagine 556. Cysteine 564 and cysteine 569 are oxidised to a cystine. N-linked (GlcNAc...) (high mannose) asparagine; by host glycosylation occurs at asparagine 576. Disulfide bonds link cysteine 581–cysteine 585, cysteine 597–cysteine 620, and cysteine 607–cysteine 644. N-linked (GlcNAc...) (high mannose) asparagine; by host glycosylation is found at asparagine 623 and asparagine 645. Cysteines 652 and 677 form a disulfide. Residues 660–671 (SELSPLLLTTTQ) are EIF2AK2/eIF2-alpha phosphorylation homology domain (PePHD). A helical membrane pass occupies residues 726 to 746 (LADARVCSCLWMMLLISQAEA). The Lumenal segment spans residues 747–757 (ALENLVILNAA). Residues 758–778 (SLAGTHGLVSFLVFFCFAWYL) form a helical membrane-spanning segment. Residues 779 to 781 (KGK) are Cytoplasmic-facing. A helical transmembrane segment spans residues 782–803 (WVPGAVYTFYGMWPLLLLLLAL). Residues 804–813 (PQRAYALDTE) lie on the Lumenal side of the membrane. The helical transmembrane segment at 814 to 834 (VAASCGGVVLVGLMALTLSPY) threads the bilayer. Residues 835 to 838 (YKRY) lie on the Cytoplasmic side of the membrane. Residues 839 to 859 (ISWCLWWLQYFLTRVEAQLHV) form a helical membrane-spanning segment. The Lumenal portion of the chain corresponds to 860–881 (WIPPLNVRGGRDAVILLMCAVH). The chain crosses the membrane as a helical span at residues 882 to 902 (PTLVFDITKLLLAVFGPLWIL). Residues 899–1026 (LWILQASLLK…GMVSKGWRLL (128 aa)) form the Peptidase C18 domain. Residues 903–1657 (QASLLKVPYF…CMSADLEVVT (755 aa)) are Cytoplasmic-facing. The protease NS2-3 stretch occupies residues 904 to 1206 (ASLLKVPYFV…PVENLETTMR (303 aa)). The S-palmitoyl cysteine; by host moiety is linked to residue cysteine 922. Positions 929–949 (IGGHYVQMVIIKLGALTGTYV) are interaction with host SCPS1. Residues histidine 952, glutamate 972, and cysteine 993 each act as for protease NS2 activity; shared with dimeric partner in the active site. Residues 1027–1208 (APITAYAQQT…ENLETTMRSP (182 aa)) enclose the Peptidase S29 domain. Active-site charge relay system; for serine protease NS3 activity residues include histidine 1083 and aspartate 1107. Zn(2+) is bound by residues cysteine 1123 and cysteine 1125. Serine 1165 (charge relay system; for serine protease NS3 activity) is an active-site residue. Zn(2+) is bound by residues cysteine 1171 and histidine 1175. Residues 1217-1369 (PVVPQSFQVA…PNIEEVALST (153 aa)) form the Helicase ATP-binding domain. 1230 to 1237 (APTGSGKS) lines the ATP pocket. The Mg(2+) site is built by serine 1237 and glutamate 1317. A DECH box motif is present at residues 1316–1319 (DECH). The RNA-binding stretch occupies residues 1486–1497 (QRRGRTGRGKPG). A helical transmembrane segment spans residues 1658–1678 (STWVLVGGVLAALAAYCLSTG). Residues 1679-1690 (CVVIVGRVVLSG) are NS3-binding. The Cytoplasmic portion of the chain corresponds to 1679–1805 (CVVIVGRVVL…AVTSPLTTSQ (127 aa)). Residues 1806-1826 (TLLFNILGGWVAAQLAAPGAA) traverse the membrane as a helical segment. Over 1827-1828 (TA) the chain is Lumenal. The chain crosses the membrane as a helical span at residues 1829 to 1849 (FVGAGLAGAAIGSVGLGKVLI). A glycine zipper region spans residues 1833 to 1861 (GLAGAAIGSVGLGKVLIDILAGYGAGVAG). Aspartate 1850 is a topological domain (cytoplasmic). A helical transmembrane segment spans residues 1851–1871 (ILAGYGAGVAGALVAFKIMSG). Over 1872-1881 (EVPSTEDLVN) the chain is Lumenal. A helical membrane pass occupies residues 1882-1902 (LLPAILSPGALVVGVVCAAIL). Residues 1903-1972 (RRHVGPGEGA…WISSECTTPC (70 aa)) are Cytoplasmic-facing. S-palmitoyl cysteine; by host attachment occurs at residues cysteine 1968 and cysteine 1972. An intramembrane segment occupies 1973-2003 (SGSWLRDIWDWICEVLSDFKTWLKAKLMPQL). Residues 1978–1998 (RDIWDWICEVLSDFKTWLKAK) are membrane-binding. At 2004-2990 (PGIPFVSCQR…YHSVSHARPR (987 aa)) the chain is on the cytoplasmic side. An RNA-binding region spans residues 2005–2221 (GIPFVSCQRG…KATCTANHDS (217 aa)). Positions 2011, 2029, 2031, and 2052 each coordinate Zn(2+). The interval 2120 to 2208 (EFFTELDGVR…ASSSASQLSA (89 aa)) is FKBP8-binding. The interval 2120–2332 (EFFTELDGVR…PVPPPRKKRT (213 aa)) is transcriptional activation. The segment at 2135–2139 (PPCKP) is interaction with non-structural protein 4A. The interval 2189–2441 (RLARGSPPSV…TPCAAEEQKL (253 aa)) is interaction with host SKP2. The residue at position 2194 (serine 2194) is a Phosphoserine; by host; in p56. A phosphoserine; by host; in p58 mark is found at serine 2197, serine 2201, serine 2204, serine 2207, and serine 2210. The ISDR stretch occupies residues 2206-2245 (LSAPSLKATCTANHDSPDAELIEANLLWRQEMGGNITRVE). The segment at 2210-2275 (SLKATCTANH…REISVPAEIL (66 aa)) is EIF2AK2/PKR-binding. Residues 2249–2306 (KVVILDSFDPLVAEEDEREISVPAEILRKSRRFAQALPVWARPDYNPPLVETWKKPDY) form an NS4B-binding region. Disordered stretches follow at residues 2312–2334 (HGCP…RTVV) and 2351–2408 (SFGS…WSTV). Positions 2315–2326 (PLPPPKSPPVPP) are enriched in pro residues. Serine 2321 carries the phosphoserine; by host modification. An SH3-binding motif is present at residues 2322–2325 (PPVP). Positions 2326–2334 (PPRKKRTVV) match the Nuclear localization signal motif. The interval 2332–2441 (TVVLTESTLS…TPCAAEEQKL (110 aa)) is interaction with host IFI27. Positions 2351-2369 (SFGSSSTSGITGDNTTTSS) are enriched in low complexity. The interval 2354–2377 (SSSTSGITGDNTTTSSEPAPSGCP) is V3. A phosphoserine; by host mark is found at serine 2449 and serine 2462. One can recognise a RdRp catalytic domain in the interval 2634–2752 (PMGFSYDTRC…ICESAGVQED (119 aa)). Residues aspartate 2640, aspartate 2738, and aspartate 2739 each contribute to the Mg(2+) site. Residues 2991–3011 (WIWFCLLLLAAGVGIYLLPNR) traverse the membrane as a helical segment.

Belongs to the hepacivirus polyprotein family. As to quaternary structure, homooligomer. Interacts with E1 (via C-terminus). Interacts with the non-structural protein 5A. Interacts (via N-terminus) with host STAT1 (via SH2 domain); this interaction results in decreased STAT1 phosphorylation and ubiquitin-mediated proteasome-dependent STAT1 degradation, leading to decreased IFN-stimulated gene transcription. Interacts with host STAT3; this interaction constitutively activates STAT3. Interacts with host LTBR receptor. Interacts with host TNFRSF1A receptor and possibly induces apoptosis. Interacts with host HNRPK. Interacts with host YWHAE. Interacts with host UBE3A/E6AP. Interacts with host DDX3X. Interacts with host APOA2. Interacts with host RXRA protein. Interacts with host SP110 isoform 3/Sp110b; this interaction sequesters the transcriptional corepressor SP110 away from the nucleus. Interacts with host CREB3 nuclear transcription protein; this interaction triggers cell transformation. Interacts with host ACY3. Interacts with host C1QR1. Interacts with host RBM24; this interaction, which enhances the interaction of the mature core protein with 5'-UTR, may inhibit viral translation and favor replication. Interacts with host EIF2AK2/PKR; this interaction induces the autophosphorylation of EIF2AK2. Part of the viral assembly initiation complex composed of NS2, E1, E2, NS3, NS4A, NS5A and the mature core protein. In terms of assembly, forms a heterodimer with envelope glycoprotein E2. Interacts with mature core protein. Interacts with protease NS2. The heterodimer E1/E2 interacts with host CLDN1; this interaction plays a role in viral entry into host cell. Interacts with host SPSB2 (via C-terminus). Part of the viral assembly initiation complex composed of NS2, E1, E2, NS3, NS4A, NS5A and the mature core protein. Interacts with host NEURL3; this interaction prevents E1 binding to glycoprotein E2. Forms a heterodimer with envelope glycoprotein E1. Interacts with host CD81 and SCARB1 receptors; these interactions play a role in viral entry into host cell. Interacts with host EIF2AK2/PKR; this interaction inhibits EIF2AK2 and probably allows the virus to evade the innate immune response. Interacts with host CD209/DC-SIGN and CLEC4M/DC-SIGNR. Interact with host SPCS1; this interaction is essential for viral particle assembly. Interacts with protease NS2. The heterodimer E1/E2 interacts with host CLDN1; this interaction plays a role in viral entry into host cell. Part of the viral assembly initiation complex composed of NS2, E1, E2, NS3, NS4A, NS5A and the mature core protein. Interacts with host SLC3A2/4F2hc; the interaction may facilitate viral entry into host cell. Interacts with human PLSCR1. As to quaternary structure, homohexamer. Homoheptamer. Interacts with protease NS2. In terms of assembly, homodimer. Interacts with host SPCS1; this interaction is essential for viral particle assembly. Interacts with envelope glycoprotein E1. Interacts with envelope glycoprotein E2. Interacts with viroporin p7. Interacts with serine protease/helicase NS3. Part of the replication complex composed of NS2, NS3, NS4A, NS4B, NS5A and the RNA-directed RNA polymerase embedded in an ER-derived membranous web. Part of the viral assembly initiation complex composed of NS2, E1, E2, NS3, NS4A, NS5A and the mature core protein. Interacts with protease NS2. Interacts with non-structural protein 4A; this interaction stabilizes the folding of NS3 serine protease. NS3-NS4A interaction is essential for NS3 activation and allows membrane anchorage of the latter. NS3/NS4A complex also prevents phosphorylation of host IRF3, thus preventing the establishment of dsRNA induced antiviral state. Interacts with host MAVS; this interaction leads to the cleavage and inhibition of host MAVS. Interacts with host TICAM1; this interaction leads to the cleavage and inhibition of host TICAM1. Interacts with host TANK-binding kinase/TBK1; this interaction results in the inhibition of the association between TBK1 and IRF3, which leads to the inhibition of IRF3 activation. Interacts with host RBM24. Part of the replication complex composed of NS2, NS3, NS4A, NS4B, NS5A and the RNA-directed RNA polymerase embedded in an ER-derived membranous web. Part of the viral assembly initiation complex composed of NS2, E1, E2, NS3, NS4A, NS5A and the mature core protein. As to quaternary structure, interacts with NS3 serine protease; this interaction stabilizes the folding of NS3 serine protease. NS3-NS4A interaction is essential for NS3 activation and allows membrane anchorage of the latter. Interacts with non-structural protein 5A (via N-terminus). Part of the replication complex composed of NS2, NS3, NS4A, NS4B, NS5A and the RNA-directed RNA polymerase embedded in an ER-derived membranous web. Part of the viral assembly initiation complex composed of NS2, E1, E2, NS3, NS4A, NS5A and the mature core protein. In terms of assembly, homomultimer. Interacts with non-structural protein NS5A. Interacts with host PLA2G4C; this interaction likely initiates the recruitment of replication complexes to lipid droplets. Interacts with host STING; this interaction disrupts the interaction between STING and TBK1 thereby suppressing the interferon signaling. Part of the replication complex composed of NS2, NS3, NS4A, NS4B, NS5A and the RNA-directed RNA polymerase embedded in an ER-derived membranous web. Monomer. Homodimer; dimerization is required for RNA-binding. Interacts with mature core protein. Interacts (via N-terminus) with non-structural protein 4A. Interacts with non-structural protein 4B. Interacts with RNA-directed RNA polymerase. Part of the viral assembly initiation complex composed of NS2, E1, E2, NS3, NS4A, NS5A and the mature core protein. Part of the replication complex composed of NS2, NS3, NS4A, NS4B, NS5A and the RNA-directed RNA polymerase. Interacts with host GRB2. Interacts with host BIN1. Interacts with host PIK3R1. Interacts with host SRCAP. Interacts with host FKBP8. Interacts with host VAPB. Interacts with host EIF2AK2/PKR; this interaction leads to disruption of EIF2AK2 dimerization by NS5A and probably allows the virus to evade the innate immune response. Interacts (via N-terminus) with host PACSIN2 (via N-terminus); this interaction attenuates protein kinase C alpha-mediated phosphorylation of PACSIN2 by disrupting the interaction between PACSIN2 and PRKCA. Interacts (via N-terminus) with host SRC kinase (via SH2 domain). Interacts with most Src-family kinases. Interacts with host IFI27 and SKP2; promotes the ubiquitin-mediated proteasomal degradation of NS5A. Interacts with host GPS2. Interacts with host TNFRSF21; this interaction allows the modulation by the virus of JNK, p38 MAPK, STAT3, and Akt signaling pathways in a DR6-dependent manner. Interacts (via N-terminus) with host CIDEB (via N-terminus); this interaction seems to regulate the association of HCV particles with APOE. Interacts with host CHKA/Choline Kinase-alpha; CHKA bridges host PI4KA and NS5A and potentiates NS5A-stimulated PI4KA activity, which then facilitates the targeting of the ternary complex to the ER for viral replication. Interacts with host SPSB2 (via C-terminus); this interaction targets NS5A for ubiquitination and degradation. Interacts with host RAB18; this interaction may promote the association of NS5A and other replicase components with lipid droplets. Interacts with host TRIM14; this interaction induces the degradation of NS5A. As to quaternary structure, homooligomer. Interacts with non-structural protein 5A. Interacts with host VAPB. Interacts with host PRK2/PKN2. Interacts with host HNRNPA1 and SEPT6; these interactions facilitate viral replication. Part of the replication complex composed of NS2, NS3, NS4A, NS4B, NS5A and the RNA-directed RNA polymerase. Initiates RNA transcription/replication at a flavin adenine dinucleotide (FAD), resulting in a 5'- FAD cap on viral RNAs. In this way, recognition of viral 5' RNA by host pattern recognition receptors can be bypassed, thereby evading activation of antiviral pathways. Zn(2+) is required as a cofactor. Mg(2+) serves as cofactor. Post-translationally, specific enzymatic cleavages in vivo yield mature proteins. The structural proteins, core, E1, E2 and p7 are produced by proteolytic processing by host signal peptidases. The core protein precursor is synthesized as a 23 kDa protein which is retained in the ER membrane through the hydrophobic signal peptide. Cleavage by the signal peptidase releases the 21 kDa mature core protein. The cleavage of the core protein precursor occurs between aminoacids 176 and 188 but the exact cleavage site is not known. Some degraded forms of the core protein appear as well during the course of infection. The other proteins (p7, NS2, NS3, NS4A, NS4B, NS5A and NS5B) are cleaved by the viral proteases. Autoprocessing between NS2 and NS3 is mediated by the NS2 cysteine protease catalytic domain and regulated by the NS3 N-terminal domain. In terms of processing, phosphorylated by host PKC and PKA. Ubiquitinated; mediated by UBE3A and leading to core protein subsequent proteasomal degradation. Post-translationally, highly N-glycosylated. In terms of processing, palmitoylation is required for NS2/3 autoprocessing and E2 recruitment to membranes. Palmitoylated. This modification may play a role in its polymerization or in protein-protein interactions. Post-translationally, cleaved by host caspases which are probably activated by the viral infection. In terms of processing, ubiquitinated. Ubiquitination, most probably at Lys-2350, mediated by host IFI27 and SKP2 leads to proteasomal degradation, restricting viral infection. Phosphorylated on serines in a basal form termed p56. p58 is a hyperphosphorylated form of p56. p56 and p58 coexist in the cell in roughly equivalent amounts. Hyperphosphorylation is dependent on the presence of NS4A. Host CSNK1A1/CKI-alpha or RPS6KB1 kinases may be responsible for NS5A phosphorylation. Phosphorylated NS5A is involved in viral replication. Post-translationally, tyrosine phosphorylation is essential for the interaction with host SRC. In terms of processing, the N-terminus is phosphorylated by host PRK2/PKN2.

Its subcellular location is the host endoplasmic reticulum membrane. It localises to the host mitochondrion membrane. The protein localises to the virion. The protein resides in the host cytoplasm. It is found in the host nucleus. Its subcellular location is the host lipid droplet. It localises to the virion membrane. The protein localises to the host mitochondrion. The protein resides in the host cell membrane. It is found in the host perinuclear region. The catalysed reaction is Hydrolysis of four peptide bonds in the viral precursor polyprotein, commonly with Asp or Glu in the P6 position, Cys or Thr in P1 and Ser or Ala in P1'.. It catalyses the reaction a ribonucleoside 5'-triphosphate + H2O = a ribonucleoside 5'-diphosphate + phosphate + H(+). The enzyme catalyses ATP + H2O = ADP + phosphate + H(+). It carries out the reaction RNA(n) + a ribonucleoside 5'-triphosphate = RNA(n+1) + diphosphate. Inhibited by the antiviral drug hexamethylene amiloride. Inhibition by amantadine appears to be genotype-dependent. Also inhibited by long-alkyl-chain iminosugar derivatives. With respect to regulation, activity is up-regulated by PRK2/PKN2-mediated phosphorylation. Functionally, packages viral RNA to form a viral nucleocapsid, and promotes virion budding. Participates in the viral particle production as a result of its interaction with the non-structural protein 5A. Binds RNA and may function as a RNA chaperone to induce the RNA structural rearrangements taking place during virus replication. Modulates viral translation initiation by interacting with viral IRES and 40S ribosomal subunit. Affects various cell signaling pathways, host immunity and lipid metabolism. Prevents the establishment of cellular antiviral state by blocking the interferon-alpha/beta (IFN-alpha/beta) and IFN-gamma signaling pathways and by blocking the formation of phosphorylated STAT1 and promoting ubiquitin-mediated proteasome-dependent degradation of STAT1. Activates STAT3 leading to cellular transformation. Regulates the activity of cellular genes, including c-myc and c-fos. May repress the promoter of p53, and sequester CREB3 and SP110 isoform 3/Sp110b in the cytoplasm. Represses cell cycle negative regulating factor CDKN1A, thereby interrupting an important check point of normal cell cycle regulation. Targets transcription factors involved in the regulation of inflammatory responses and in the immune response: suppresses TNF-induced NF-kappa-B activation, and activates AP-1. Binds to dendritic cells (DCs) via C1QR1, resulting in down-regulation of T-lymphocytes proliferation. Alters lipid metabolism by interacting with hepatocellular proteins involved in lipid accumulation and storage. Induces up-regulation of FAS promoter activity, and thereby contributes to the increased triglyceride accumulation in hepatocytes (steatosis). Forms a heterodimer with envelope glycoprotein E2, which mediates virus attachment to the host cell, virion internalization through clathrin-dependent endocytosis and fusion with host membrane. Fusion with the host cell is most likely mediated by both E1 and E2, through conformational rearrangements of the heterodimer required for fusion rather than a classical class II fusion mechanism. E1/E2 heterodimer binds host apolipoproteins such as APOB and APOE thereby forming a lipo-viro-particle (LVP). APOE associated to the LVP allows the initial virus attachment to cell surface receptors such as the heparan sulfate proteoglycans (HSPGs), syndecan-1 (SDC1), syndecan-1 (SDC2), the low-density lipoprotein receptor (LDLR) and scavenger receptor class B type I (SCARB1). The cholesterol transfer activity of SCARB1 allows E2 exposure and binding of E2 to SCARB1 and the tetraspanin CD81. E1/E2 heterodimer binding on CD81 activates the epithelial growth factor receptor (EGFR) signaling pathway. Diffusion of the complex E1-E2-EGFR-SCARB1-CD81 to the cell lateral membrane allows further interaction with Claudin 1 (CLDN1) and occludin (OCLN) to finally trigger HCV entry. In terms of biological role, forms a heterodimer with envelope glycoprotein E1, which mediates virus attachment to the host cell, virion internalization through clathrin-dependent endocytosis and fusion with host membrane. Fusion with the host cell is most likely mediated by both E1 and E2, through conformational rearrangements of the heterodimer required for fusion rather than a classical class II fusion mechanism. The interaction between envelope glycoprotein E2 and host apolipoprotein E/APOE allows the proper assembly, maturation and infectivity of the viral particles. This interaction is probably promoted via the up-regulation of cellular autophagy by the virus. E1/E2 heterodimer binds host apolipoproteins such as APOB and APOE thereby forming a lipo-viro-particle (LVP). APOE associated to the LVP allows the initial virus attachment to cell surface receptors such as the heparan sulfate proteoglycans (HSPGs), syndecan-1 (SDC1), syndecan-1 (SDC2), the low-density lipoprotein receptor (LDLR) and scavenger receptor class B type I (SCARB1). The cholesterol transfer activity of SCARB1 allows E2 exposure and binding of E2 to SCARB1 and the tetraspanin CD81. E1/E2 heterodimer binding on CD81 activates the epithelial growth factor receptor (EGFR) signaling pathway. Diffusion of the complex E1-E2-EGFR-SCARB1-CD81 to the cell lateral membrane allows further interaction with Claudin 1 (CLDN1) and occludin (OCLN) to finally trigger HCV entry. Inhibits host EIF2AK2/PKR activation, preventing the establishment of an antiviral state. Viral ligand for CD209/DC-SIGN and CLEC4M/DC-SIGNR, which are respectively found on dendritic cells (DCs), and on liver sinusoidal endothelial cells and macrophage-like cells of lymph node sinuses. These interactions allow the capture of circulating HCV particles by these cells and subsequent facilitated transmission to permissive cells such as hepatocytes and lymphocyte subpopulations. The interaction between E2 and host amino acid transporter complex formed by SLC3A2 and SLC7A5/LAT1 may facilitate viral entry into host cell. Its function is as follows. Ion channel protein that acts as a viroporin and plays an essential role in the assembly, envelopment and secretion of viral particles. Regulates the host cell secretory pathway, which induces the intracellular retention of viral glycoproteins and favors assembly of viral particles. Creates a pore in acidic organelles and releases Ca(2+) and H(+) in the cytoplasm of infected cells, leading to a productive viral infection. High levels of cytoplasmic Ca(2+) may trigger membrane trafficking and transport of viral ER-associated proteins to viroplasms, sites of viral genome replication. This ionic imbalance induces the assembly of the inflammasome complex, which triggers the maturation of pro-IL-1beta into IL-1beta through the action of caspase-1. Targets also host mitochondria and induces mitochondrial depolarization. In addition of its role as a viroporin, acts as a lipid raft adhesion factor. Functionally, cysteine protease required for the proteolytic auto-cleavage between the non-structural proteins NS2 and NS3. The N-terminus of NS3 is required for the function of NS2 protease (active region NS2-3). Promotes the initiation of viral particle assembly by mediating the interaction between structural and non-structural proteins. Displays three enzymatic activities: serine protease with a chymotrypsin-like fold, NTPase and RNA helicase. NS3 serine protease, in association with NS4A, is responsible for the cleavages of NS3-NS4A, NS4A-NS4B, NS4B-NS5A and NS5A-NS5B. The NS3/NS4A complex prevents phosphorylation of host IRF3, thus preventing the establishment of dsRNA induced antiviral state. The NS3/NS4A complex induces host amino acid transporter component SLC3A2, thus contributing to HCV propagation. NS3 RNA helicase binds to RNA and unwinds both dsDNA and dsRNA in the 3' to 5' direction, and likely resolves RNA complicated stable secondary structures in the template strand. Binds a single ATP and catalyzes the unzipping of a single base pair of dsRNA. Inhibits host antiviral proteins TBK1 and IRF3 thereby preventing the establishment of an antiviral state. Cleaves host MAVS/CARDIF thereby preventing the establishment of an antiviral state. Cleaves host TICAM1/TRIF, thereby disrupting TLR3 signaling and preventing the establishment of an antiviral state. In terms of biological role, the NS3/NS4A complex prevents phosphorylation of host IRF3, thus preventing the establishment of dsRNA induced antiviral state. The NS3/NS4A complex induces host amino acid transporter component SLC3A2, thus contributing to HCV propagation. Its function is as follows. Induces a specific membrane alteration that serves as a scaffold for the virus replication complex. This membrane alteration gives rise to the so-called ER-derived membranous web that contains the replication complex. NS4B self-interaction contributes to its function in membranous web formation. Promotes host TRIF protein degradation in a CASP8-dependent manner thereby inhibiting host TLR3-mediated interferon signaling. Disrupts the interaction between STING and TBK1 contributing to the inhibition of interferon signaling. Functionally, phosphorylated protein that is indispensable for viral replication and assembly. Both hypo- and hyperphosphorylated states are required for the viral life cycle. The hyperphosphorylated form of NS5A is an inhibitor of viral replication. Involved in RNA-binding and especially in binding to the viral genome. Zinc is essential for RNA-binding. Participates in the viral particle production as a result of its interaction with the mature viral core protein. Its interaction with host VAPB may target the viral replication complex to vesicles. Down-regulates viral IRES translation initiation. Mediates interferon resistance, presumably by interacting with and inhibiting host EIF2AK2/PKR. Prevents BIN1-induced apoptosis. Acts as a transcriptional activator of some host genes important for viral replication when localized in the nucleus. Via the interaction with host PACSIN2, modulates lipid droplet formation in order to promote virion assembly. Modulates TNFRSF21/DR6 signaling pathway for viral propagation. RNA-dependent RNA polymerase that performs primer-template recognition and RNA synthesis during viral replication. Initiates RNA transcription/replication at a flavin adenine dinucleotide (FAD), resulting in a 5'- FAD cap on viral RNAs. In this way, recognition of viral 5' RNA by host pattern recognition receptors can be bypassed, thereby evading activation of antiviral pathways. The protein is Genome polyprotein of Homo sapiens (Human).